The following is a 314-amino-acid chain: Leucine-rich repeat-containing protein 52 (314 aa).

The first 23 residues, 1–23, serve as a signal peptide directing secretion; sequence MSLASGPSSKLLLFSLGMGLVSG. One can recognise an LRRNT domain in the interval 24–53; sequence SKCPNKCVCQDQEVACIDLHLTEYPADIPL. Residues 24–244 lie on the Extracellular side of the membrane; it reads SKCPNKCVCQ…MCITHLDQQD (221 aa). 2 disulfides stabilise this stretch: C26/C32 and C30/C39. LRR repeat units follow at residues 54-73, 78-99, 102-123, 126-148, and 151-172; these read NTRR…ALQL, DLVY…TFIG, RLIY…SFSV, NLVR…VFAN, and SLRY…GFHH. 3 N-linked (GlcNAc...) asparagine glycosylation sites follow: N112, N131, and N148. Residues 184-238 enclose the LRRCT domain; sequence NPWICNCSFLDFTIHLLVSHMDHPDAQNATCTEPAELKGWPITKVGNPLQYMCIT. Intrachain disulfides connect C188/C214 and C190/C236. N189 and N211 each carry an N-linked (GlcNAc...) asparagine glycan. Residues 245 to 265 form a helical membrane-spanning segment; it reads YIFLLLIGFCIFAAGTVAAWL. The Cytoplasmic segment spans residues 266–314; that stretch reads TGVCAVLYQNALRTSSGDDTEDETGSRFANQIFRSNTHLGPIRRFPELI.

As to quaternary structure, interacts with KCNMA1. Interacts with KCNU1; this interaction may be required for LRRC52 stability and changes the channel gating properties. N-glycosylated. As to expression, testis-specific (at protein level). At the mRNA level, also detected in kidney, ventricle, spinal cord and skeletal muscle, although at lower levels compared to testis. Expression in testis at the protein level requires the presence of KCNU1.

The protein resides in the cell membrane. In terms of biological role, auxiliary protein of the large-conductance, voltage and calcium-activated potassium channel (BK alpha). Modulates gating properties by producing a marked shift in the BK channel's voltage dependence of activation in the hyperpolarizing direction, and in the absence of calcium. KCNU1 channel auxiliary protein. Modulates KCNU1 gating properties, shifting KCNU1 gating to more negative potentials at a given pH. In Mus musculus (Mouse), this protein is Leucine-rich repeat-containing protein 52 (Lrrc52).